The sequence spans 123 residues: Large ribosomal subunit protein uL18 (123 aa).

It belongs to the universal ribosomal protein uL18 family. Part of the 50S ribosomal subunit; part of the 5S rRNA/L5/L18/L25 subcomplex. Contacts the 5S and 23S rRNAs.

This is one of the proteins that bind and probably mediate the attachment of the 5S RNA into the large ribosomal subunit, where it forms part of the central protuberance. This chain is Large ribosomal subunit protein uL18, found in Wolbachia pipientis wMel.